The following is a 364-amino-acid chain: tRNA (adenine(58)-N(1))-methyltransferase catalytic subunit trm61 (364 aa).

Residues 114-116, Glu-135, Arg-140, 167-168, and Asp-186 each bind S-adenosyl-L-methionine; these read SAS and DV. Positions 280 to 309 are disordered; that stretch reads EQNLSSDAKVEDQDNDSMLGENKSSVSTET.

This sequence belongs to the class I-like SAM-binding methyltransferase superfamily. TRM61 family. In terms of assembly, heterotetramer; composed of two copies of TRM6 and two copies of TRM61.

The protein localises to the nucleus. The catalysed reaction is adenosine(58) in tRNA + S-adenosyl-L-methionine = N(1)-methyladenosine(58) in tRNA + S-adenosyl-L-homocysteine + H(+). Functionally, catalytic subunit of tRNA (adenine-N(1)-)-methyltransferase, which catalyzes the formation of N(1)-methyladenine at position 58 (m1A58) in initiator methionyl-tRNA. In Schizosaccharomyces pombe (strain 972 / ATCC 24843) (Fission yeast), this protein is tRNA (adenine(58)-N(1))-methyltransferase catalytic subunit trm61 (cpd1).